Reading from the N-terminus, the 96-residue chain is Small ribosomal subunit protein bS18 (96 aa).

This sequence belongs to the bacterial ribosomal protein bS18 family. Part of the 30S ribosomal subunit. Forms a tight heterodimer with protein bS6.

Binds as a heterodimer with protein bS6 to the central domain of the 16S rRNA, where it helps stabilize the platform of the 30S subunit. In Gluconobacter oxydans (strain 621H) (Gluconobacter suboxydans), this protein is Small ribosomal subunit protein bS18.